We begin with the raw amino-acid sequence, 488 residues long: Catalase (488 aa).

Residues 1–26 form a disordered region; the sequence is MTDRKNLTTNQGVPVGDNQNSMTAGR. Residues 7–23 show a composition bias toward polar residues; sequence LTTNQGVPVGDNQNSMT. Residues His55 and Asn128 contribute to the active site. Tyr338 is a heme binding site.

Belongs to the catalase family. Requires heme as cofactor.

It localises to the cytoplasm. The catalysed reaction is 2 H2O2 = O2 + 2 H2O. Its function is as follows. Decomposes hydrogen peroxide into water and oxygen; serves to protect cells from the toxic effects of hydrogen peroxide. The chain is Catalase (kat) from Listeria monocytogenes serovar 1/2a (strain ATCC BAA-679 / EGD-e).